Consider the following 430-residue polypeptide: Serine hydroxymethyltransferase (430 aa).

(6S)-5,6,7,8-tetrahydrofolate contacts are provided by residues leucine 123 and 127–129 (GHL). Lysine 232 bears the N6-(pyridoxal phosphate)lysine mark. Glutamate 248 is a (6S)-5,6,7,8-tetrahydrofolate binding site.

The protein belongs to the SHMT family. Homodimer. Requires pyridoxal 5'-phosphate as cofactor.

Its subcellular location is the cytoplasm. The catalysed reaction is (6R)-5,10-methylene-5,6,7,8-tetrahydrofolate + glycine + H2O = (6S)-5,6,7,8-tetrahydrofolate + L-serine. It participates in one-carbon metabolism; tetrahydrofolate interconversion. Its pathway is amino-acid biosynthesis; glycine biosynthesis; glycine from L-serine: step 1/1. Its function is as follows. Catalyzes the reversible interconversion of serine and glycine with tetrahydrofolate (THF) serving as the one-carbon carrier. This reaction serves as the major source of one-carbon groups required for the biosynthesis of purines, thymidylate, methionine, and other important biomolecules. Also exhibits THF-independent aldolase activity toward beta-hydroxyamino acids, producing glycine and aldehydes, via a retro-aldol mechanism. The sequence is that of Serine hydroxymethyltransferase from Anaplasma marginale (strain Florida).